A 98-amino-acid polypeptide reads, in one-letter code: MSQNQDRKDNDVITLVDDEGNETLFNILFTFDSEDFGHSYILLYPADAAADDEVDIQAYIFNPEDGDNGELQLIESDDEWDMVEQVLNTFLADDGGMQ.

Belongs to the UPF0473 family.

The polypeptide is UPF0473 protein lp_2273 (Lactiplantibacillus plantarum (strain ATCC BAA-793 / NCIMB 8826 / WCFS1) (Lactobacillus plantarum)).